A 156-amino-acid polypeptide reads, in one-letter code: Keratin-associated protein 13-4 (156 aa).

4 repeat units span residues 37–46 (CQLGSSLYRN), 47–56 (CQKTCWEPTS), 57–66 (CRKSCYRRRT), and 73–82 (CQTTCSRSLG). The segment at 37–82 (CQLGSSLYRNCQKTCWEPTSCRKSCYRRRTSMLCSPCQTTCSRSLG) is 4 X 10 AA approximate repeats.

It belongs to the PMG family. Interacts with hair keratins.

In terms of biological role, in the hair cortex, hair keratin intermediate filaments are embedded in an interfilamentous matrix, consisting of hair keratin-associated proteins (KRTAP), which are essential for the formation of a rigid and resistant hair shaft through their extensive disulfide bond cross-linking with abundant cysteine residues of hair keratins. The matrix proteins include the high-sulfur and high-glycine-tyrosine keratins. The polypeptide is Keratin-associated protein 13-4 (KRTAP13-4) (Macaca fascicularis (Crab-eating macaque)).